Reading from the N-terminus, the 487-residue chain is UDP-glucosyl transferase 73CC6 (487 aa).

His17 acts as the Proton acceptor in catalysis. Asp114 functions as the Charge relay in the catalytic mechanism. Positions 282, 346, 347, 364, 368, 369, 372, and 386 each coordinate UDP.

It belongs to the UDP-glycosyltransferase family. As to expression, mainly expressed in flowers and flower buds and, to a lesser extent, in leaves, stems and roots.

It participates in secondary metabolite biosynthesis; terpenoid biosynthesis. Component of the oleanane-type triterpene saponins (e.g. saponarioside A and saponarioside B) biosynthetic pathway, leading to the production of natural products with detergent properties used as traditional sources of soap. A glycosyltransferase that mediates the conversion of QA-di to QA-tri via the elongation of the C-3 sugar chain with a D-xylose. This chain is UDP-glucosyl transferase 73CC6, found in Saponaria officinalis (Common soapwort).